Reading from the N-terminus, the 105-residue chain is Large ribosomal subunit protein uL24 (105 aa).

Belongs to the universal ribosomal protein uL24 family. Part of the 50S ribosomal subunit.

Functionally, one of two assembly initiator proteins, it binds directly to the 5'-end of the 23S rRNA, where it nucleates assembly of the 50S subunit. Its function is as follows. One of the proteins that surrounds the polypeptide exit tunnel on the outside of the subunit. This Nitrosococcus oceani (strain ATCC 19707 / BCRC 17464 / JCM 30415 / NCIMB 11848 / C-107) protein is Large ribosomal subunit protein uL24.